Consider the following 389-residue polypeptide: Probable inactive purple acid phosphatase 29 (389 aa).

A signal peptide spans M1–A34. N-linked (GlcNAc...) asparagine glycosylation is present at N80. Position 136 (N136) interacts with substrate. N136 contacts Zn(2+). N191 and N267 each carry an N-linked (GlcNAc...) asparagine glycan. H303 lines the Zn(2+) pocket. H303–H305 lines the substrate pocket. H305 is a binding site for Fe cation. The N-linked (GlcNAc...) asparagine glycan is linked to N380.

Belongs to the metallophosphoesterase superfamily. Purple acid phosphatase family. Homodimer. Fe cation is required as a cofactor. Requires Zn(2+) as cofactor. As to expression, expressed in roots, stems, leaves, flowers and siliques.

The protein resides in the secreted. This is Probable inactive purple acid phosphatase 29 (PAP29) from Arabidopsis thaliana (Mouse-ear cress).